Reading from the N-terminus, the 482-residue chain is DNA polymerase II small subunit (482 aa).

Belongs to the DNA polymerase delta/II small subunit family. Heterodimer of a large subunit and a small subunit.

It carries out the reaction DNA(n) + a 2'-deoxyribonucleoside 5'-triphosphate = DNA(n+1) + diphosphate. The catalysed reaction is Exonucleolytic cleavage in the 3'- to 5'-direction to yield nucleoside 5'-phosphates.. Its function is as follows. Possesses two activities: a DNA synthesis (polymerase) and an exonucleolytic activity that degrades single-stranded DNA in the 3' to 5' direction. Has a template-primer preference which is characteristic of a replicative DNA polymerase. This is DNA polymerase II small subunit (polB) from Methanothermobacter thermautotrophicus (strain ATCC 29096 / DSM 1053 / JCM 10044 / NBRC 100330 / Delta H) (Methanobacterium thermoautotrophicum).